The sequence spans 65 residues: Large ribosomal subunit protein bL35 (65 aa).

Belongs to the bacterial ribosomal protein bL35 family.

The chain is Large ribosomal subunit protein bL35 from Desulfitobacterium hafniense (strain DSM 10664 / DCB-2).